The sequence spans 310 residues: Forkhead box protein pes-1 (310 aa).

Over residues 1–16 (MLPLSISTSPDPASQF) the composition is skewed to polar residues. Disordered stretches follow at residues 1–37 (MLPL…GTAK), 58–77 (VSPS…SPAP), 92–126 (KQSS…SNPN), and 217–242 (SLRR…PNPI). Residues 17–35 (PTVPDLPTLTPTPSPTSGT) show a composition bias toward low complexity. Positions 128–220 (RPAYSYNALI…IGKDCGSLRR (93 aa)) form a DNA-binding region, fork-head. A compositionally biased stretch (basic residues) spans 218–231 (LRRKKNGKPRKYSK).

It localises to the nucleus. The protein resides in the cytoplasm. In terms of biological role, transcription factor. Plays a role in embryogenesis and later development, perhaps acting redundantly with forkhead protein fkh-2. In Caenorhabditis briggsae, this protein is Forkhead box protein pes-1.